Consider the following 490-residue polypeptide: Betaine aldehyde dehydrogenase (490 aa).

N93 is a binding site for K(+). 150-152 (GAW) is a binding site for NAD(+). K162 acts as the Charge relay system in catalysis. 176 to 179 (KPSE) is a binding site for NAD(+). A K(+)-binding site is contributed by V180. 230-233 (GTAT) contacts NAD(+). A K(+)-binding site is contributed by L246. Residue E252 is the Proton acceptor of the active site. Residues G254, C286, and E387 each coordinate NAD(+). C286 (nucleophile) is an active-site residue. The residue at position 286 (C286) is a Cysteine sulfenic acid (-SOH). Residues K457 and G460 each coordinate K(+). E464 serves as the catalytic Charge relay system.

This sequence belongs to the aldehyde dehydrogenase family. Dimer of dimers. K(+) serves as cofactor.

The catalysed reaction is betaine aldehyde + NAD(+) + H2O = glycine betaine + NADH + 2 H(+). It participates in amine and polyamine biosynthesis; betaine biosynthesis via choline pathway; betaine from betaine aldehyde: step 1/1. Its function is as follows. Involved in the biosynthesis of the osmoprotectant glycine betaine. Catalyzes the irreversible oxidation of betaine aldehyde to the corresponding acid. This is Betaine aldehyde dehydrogenase from Xanthomonas euvesicatoria pv. vesicatoria (strain 85-10) (Xanthomonas campestris pv. vesicatoria).